The primary structure comprises 276 residues: Undecaprenyl-diphosphatase (276 aa).

6 helical membrane passes run 43–63, 85–105, 109–129, 183–203, 218–238, and 254–274; these read RAMA…VWEF, LNLL…ADTI, LFNA…MLWA, AATE…AVYS, VFAI…RALL, and IAFG…WASA.

It belongs to the UppP family.

It localises to the cell inner membrane. The enzyme catalyses di-trans,octa-cis-undecaprenyl diphosphate + H2O = di-trans,octa-cis-undecaprenyl phosphate + phosphate + H(+). Functionally, catalyzes the dephosphorylation of undecaprenyl diphosphate (UPP). Confers resistance to bacitracin. The polypeptide is Undecaprenyl-diphosphatase (Pseudomonas syringae pv. tomato (strain ATCC BAA-871 / DC3000)).